The primary structure comprises 368 residues: NAD(P)H-quinone oxidoreductase subunit 1, chloroplastic (368 aa).

The next 6 membrane-spanning stretches (helical) occupy residues 27–47, 97–117, 130–150, 269–289, 308–328, and 348–368; these read FIWI…GVLV, WLFN…YLVI, IGVF…LMAG, SSLF…PFLL, IIIG…IAIM, and FLLP…AFLL.

This sequence belongs to the complex I subunit 1 family. NDH is composed of at least 16 different subunits, 5 of which are encoded in the nucleus.

It localises to the plastid. Its subcellular location is the chloroplast thylakoid membrane. The enzyme catalyses a plastoquinone + NADH + (n+1) H(+)(in) = a plastoquinol + NAD(+) + n H(+)(out). It carries out the reaction a plastoquinone + NADPH + (n+1) H(+)(in) = a plastoquinol + NADP(+) + n H(+)(out). In terms of biological role, NDH shuttles electrons from NAD(P)H:plastoquinone, via FMN and iron-sulfur (Fe-S) centers, to quinones in the photosynthetic chain and possibly in a chloroplast respiratory chain. The immediate electron acceptor for the enzyme in this species is believed to be plastoquinone. Couples the redox reaction to proton translocation, and thus conserves the redox energy in a proton gradient. The sequence is that of NAD(P)H-quinone oxidoreductase subunit 1, chloroplastic from Physcomitrium patens (Spreading-leaved earth moss).